The primary structure comprises 83 residues: Small ribosomal subunit protein bS16 (83 aa).

This sequence belongs to the bacterial ribosomal protein bS16 family.

The protein is Small ribosomal subunit protein bS16 of Shewanella baltica (strain OS223).